The chain runs to 349 residues: Defect at low temperature protein 1 (349 aa).

Topologically, residues 1-18 (MPIIDFEIWKLWLFRSIK) are cytoplasmic. The chain crosses the membrane as a helical span at residues 19 to 39 (AIVIIFLVGFSIVLPVDSIVQ). Topologically, residues 40–49 (AAESSNTALN) are extracellular. Residues 50–70 (TFIVVGALVAFGLVSIIIIVG) traverse the membrane as a helical segment. Residues 71–349 (RIIFCRSCIQ…ADSFKYVTHR (279 aa)) lie on the Cytoplasmic side of the membrane. The segment at 312–333 (VPTNPEEEHKMALDPQDPVSHK) is disordered.

It belongs to the DLT1 family.

The protein resides in the membrane. Its function is as follows. Required for growth under high-pressure and low-temperature conditions. The chain is Defect at low temperature protein 1 (DLT1) from Zygosaccharomyces rouxii (strain ATCC 2623 / CBS 732 / NBRC 1130 / NCYC 568 / NRRL Y-229).